An 816-amino-acid polypeptide reads, in one-letter code: Phosphatidylinositol 4-kinase beta (816 aa).

Positions 1 to 30 (MGDTVVEPTPLKPTSESTPGPAGSNGGSLL) are disordered. N-acetylglycine is present on G2. An interaction with ACBD3 region spans residues 2–68 (GDTVVEPTPL…VKLLHGGVAI (67 aa)). Residues 52 to 242 (CQEVLEKVKL…GTKLRKLILS (191 aa)) form the PIK helical domain. The interval 248–318 (AHRKRELPSL…TESIDNSFSS (71 aa)) is disordered. The residue at position 258 (S258) is a Phosphoserine. Phosphothreonine is present on T263. Phosphoserine is present on residues S266, S275, S277, S284, and S294. Polar residues-rich tracts occupy residues 278–297 (DATASISLSSNLKRTASNPK) and 306–318 (SSSTESIDNSFSS). S428 carries the post-translational modification Phosphoserine. T438 is subject to Phosphothreonine. S511 is modified (phosphoserine). 2 positions are modified to phosphothreonine: T517 and T519. Positions 535 to 801 (EPWQEKVRRI…MVDGSMRSIT (267 aa)) constitute a PI3K/PI4K catalytic domain. The tract at residues 541–547 (VRRIREG) is G-loop. The interval 668–676 (QVKDRHNGN) is catalytic loop. Residues 687-711 (HIDFGFILSSSPRNLGFETSAFKLT) form an activation loop region.

The protein belongs to the PI3/PI4-kinase family. Type III PI4K subfamily. Interacts with ARF1 and ARF3 in the Golgi complex, but not with ARF4, ARF5 or ARF6. Interacts with NCS1/FREQ in a calcium-independent manner. Interacts with CALN1/CABP8 and CALN2/CABP7; in a calcium-dependent manner; this interaction competes with NCS1/FREQ binding. Interacts with ACBD3. Interacts with ARMH3, YWHAB, YWHAE, YWHAG, YWHAH, YWHAQ, YWHAZ and SFN. Interacts with GGA2 (via VHS domain); the interaction is important for PI4KB location at the Golgi apparatus membrane. Interacts with ATG9A. The cofactor is Mg(2+). It depends on Mn(2+) as a cofactor.

It localises to the endomembrane system. The protein localises to the mitochondrion outer membrane. It is found in the rough endoplasmic reticulum membrane. The protein resides in the golgi apparatus. Its subcellular location is the golgi apparatus membrane. It carries out the reaction a 1,2-diacyl-sn-glycero-3-phospho-(1D-myo-inositol) + ATP = a 1,2-diacyl-sn-glycero-3-phospho-(1D-myo-inositol 4-phosphate) + ADP + H(+). Its activity is regulated as follows. Inhibited by wortmannin. Increased kinase activity upon interaction with NCS1/FREQ. In terms of biological role, phosphorylates phosphatidylinositol (PI) in the first committed step in the production of the second messenger inositol-1,4,5,-trisphosphate (PIP). May regulate Golgi disintegration/reorganization during mitosis, possibly via its phosphorylation. Involved in Golgi-to-plasma membrane trafficking. May play an important role in the inner ear development. The protein is Phosphatidylinositol 4-kinase beta (PI4KB) of Otolemur garnettii (Small-eared galago).